The chain runs to 189 residues: Peptidyl-tRNA hydrolase (189 aa).

Residue tyrosine 14 participates in tRNA binding. Histidine 19 (proton acceptor) is an active-site residue. Positions 64, 66, and 112 each coordinate tRNA.

This sequence belongs to the PTH family. As to quaternary structure, monomer.

It localises to the cytoplasm. The enzyme catalyses an N-acyl-L-alpha-aminoacyl-tRNA + H2O = an N-acyl-L-amino acid + a tRNA + H(+). Hydrolyzes ribosome-free peptidyl-tRNAs (with 1 or more amino acids incorporated), which drop off the ribosome during protein synthesis, or as a result of ribosome stalling. Functionally, catalyzes the release of premature peptidyl moieties from peptidyl-tRNA molecules trapped in stalled 50S ribosomal subunits, and thus maintains levels of free tRNAs and 50S ribosomes. This chain is Peptidyl-tRNA hydrolase, found in Zymomonas mobilis subsp. mobilis (strain ATCC 31821 / ZM4 / CP4).